The primary structure comprises 122 residues: Large ribosomal subunit protein bL17 (122 aa).

The protein belongs to the bacterial ribosomal protein bL17 family. In terms of assembly, part of the 50S ribosomal subunit. Contacts protein L32.

The sequence is that of Large ribosomal subunit protein bL17 from Staphylococcus aureus (strain Mu3 / ATCC 700698).